We begin with the raw amino-acid sequence, 373 residues long: Ribosomal RNA small subunit methyltransferase H (373 aa).

Residues 92–94, Asp111, Tyr138, Asp159, and Gln166 contribute to the S-adenosyl-L-methionine site; that span reads GGH. Composition is skewed to basic and acidic residues over residues 343–355 and 363–373; these read AERA…ERNP and RALEKVGGRGS. The segment at 343-373 is disordered; that stretch reads AERADEQEIERNPRSAPVRLRALEKVGGRGS.

The protein belongs to the methyltransferase superfamily. RsmH family.

It is found in the cytoplasm. It catalyses the reaction cytidine(1402) in 16S rRNA + S-adenosyl-L-methionine = N(4)-methylcytidine(1402) in 16S rRNA + S-adenosyl-L-homocysteine + H(+). Functionally, specifically methylates the N4 position of cytidine in position 1402 (C1402) of 16S rRNA. This is Ribosomal RNA small subunit methyltransferase H from Mycolicibacterium smegmatis (strain ATCC 700084 / mc(2)155) (Mycobacterium smegmatis).